The primary structure comprises 118 residues: Large ribosomal subunit protein uL18 (118 aa).

It belongs to the universal ribosomal protein uL18 family. As to quaternary structure, part of the 50S ribosomal subunit; part of the 5S rRNA/L5/L18/L25 subcomplex. Contacts the 5S and 23S rRNAs.

Its function is as follows. This is one of the proteins that bind and probably mediate the attachment of the 5S RNA into the large ribosomal subunit, where it forms part of the central protuberance. The polypeptide is Large ribosomal subunit protein uL18 (Rickettsia typhi (strain ATCC VR-144 / Wilmington)).